The primary structure comprises 577 residues: Nuclear fusion protein tht1 (577 aa).

The first 29 residues, 1–29, serve as a signal peptide directing secretion; sequence MKFHPTRPFGLYFEFFIIISFFFTSESTG. At 30–404 the chain is on the lumenal side; the sequence is DVESFMKYSN…MNVYFKGLSN (375 aa). N-linked (GlcNAc...) asparagine glycosylation is found at Asn163 and Asn372. Residues 405-425 form a helical membrane-spanning segment; that stretch reads IISSFAFIGFTLFATLSSLFF. Over 426–433 the chain is Cytoplasmic; the sequence is KVLKIHRR. The helical transmembrane segment at 434–454 threads the bilayer; that stretch reads PIIVFGSLSIIFIHIYCFKIT. Residues 455–470 are Lumenal-facing; that stretch reads SWVNLYGWITCTIART. A helical transmembrane segment spans residues 471–491; it reads LSFIKLNIRTFYLTAFLCALL. Over 492-577 the chain is Cytoplasmic; it reads NFLRYLKYRN…ESLEQSPWWD (86 aa).

It belongs to the KAR5 family. Post-translationally, N-glycosylated.

The protein localises to the endoplasmic reticulum membrane. It localises to the nucleus membrane. In terms of biological role, required for nuclear membrane fusion during karyogamy. The polypeptide is Nuclear fusion protein tht1 (tht1) (Schizosaccharomyces pombe (strain 972 / ATCC 24843) (Fission yeast)).